A 279-amino-acid chain; its full sequence is Tryptophan synthase alpha chain (279 aa).

Residues glutamate 50 and aspartate 61 each act as proton acceptor in the active site.

The protein belongs to the TrpA family. Tetramer of two alpha and two beta chains.

The enzyme catalyses (1S,2R)-1-C-(indol-3-yl)glycerol 3-phosphate + L-serine = D-glyceraldehyde 3-phosphate + L-tryptophan + H2O. The protein operates within amino-acid biosynthesis; L-tryptophan biosynthesis; L-tryptophan from chorismate: step 5/5. The alpha subunit is responsible for the aldol cleavage of indoleglycerol phosphate to indole and glyceraldehyde 3-phosphate. This Sinorhizobium fredii (strain NBRC 101917 / NGR234) protein is Tryptophan synthase alpha chain.